Consider the following 276-residue polypeptide: ATP synthase subunit a (276 aa).

Helical transmembrane passes span 49 to 69 (KPML…FAAA), 109 to 129 (YLFT…IPFI), 137 to 157 (SGMV…AGIS), 173 to 193 (GIRG…NILV), 203 to 223 (FANM…GEYI), 232 to 252 (APVG…EMLI), and 253 to 273 (QFLQ…GAVA).

The protein belongs to the ATPase A chain family. F-type ATPases have 2 components, CF(1) - the catalytic core - and CF(0) - the membrane proton channel. CF(1) has five subunits: alpha(3), beta(3), gamma(1), delta(1), epsilon(1). CF(0) has three main subunits: a(1), b(2) and c(9-12). The alpha and beta chains form an alternating ring which encloses part of the gamma chain. CF(1) is attached to CF(0) by a central stalk formed by the gamma and epsilon chains, while a peripheral stalk is formed by the delta and b chains.

It is found in the cell membrane. Key component of the proton channel; it plays a direct role in the translocation of protons across the membrane. The polypeptide is ATP synthase subunit a (Nocardioides sp. (strain ATCC BAA-499 / JS614)).